An 83-amino-acid chain; its full sequence is Large ribosomal subunit protein bL28 (83 aa).

This sequence belongs to the bacterial ribosomal protein bL28 family.

The protein is Large ribosomal subunit protein bL28 of Amoebophilus asiaticus (strain 5a2).